The sequence spans 258 residues: Acyl-[acyl-carrier-protein]--UDP-N-acetylglucosamine O-acyltransferase (258 aa).

It belongs to the transferase hexapeptide repeat family. LpxA subfamily. In terms of assembly, homotrimer.

The protein resides in the cytoplasm. The enzyme catalyses a (3R)-hydroxyacyl-[ACP] + UDP-N-acetyl-alpha-D-glucosamine = a UDP-3-O-[(3R)-3-hydroxyacyl]-N-acetyl-alpha-D-glucosamine + holo-[ACP]. It participates in glycolipid biosynthesis; lipid IV(A) biosynthesis; lipid IV(A) from (3R)-3-hydroxytetradecanoyl-[acyl-carrier-protein] and UDP-N-acetyl-alpha-D-glucosamine: step 1/6. Involved in the biosynthesis of lipid A, a phosphorylated glycolipid that anchors the lipopolysaccharide to the outer membrane of the cell. The sequence is that of Acyl-[acyl-carrier-protein]--UDP-N-acetylglucosamine O-acyltransferase from Pseudomonas putida (strain W619).